The chain runs to 307 residues: Acetyl-coenzyme A carboxylase carboxyl transferase subunit beta (307 aa).

In terms of domain architecture, CoA carboxyltransferase N-terminal spans 25–294 (LWIKDPESGE…TEENGSRRLP (270 aa)).

It belongs to the AccD/PCCB family. As to quaternary structure, acetyl-CoA carboxylase is a heterohexamer composed of biotin carboxyl carrier protein (AccB), biotin carboxylase (AccC) and two subunits each of ACCase subunit alpha (AccA) and ACCase subunit beta (AccD).

It localises to the cytoplasm. The catalysed reaction is N(6)-carboxybiotinyl-L-lysyl-[protein] + acetyl-CoA = N(6)-biotinyl-L-lysyl-[protein] + malonyl-CoA. Its pathway is lipid metabolism; malonyl-CoA biosynthesis; malonyl-CoA from acetyl-CoA: step 1/1. Functionally, component of the acetyl coenzyme A carboxylase (ACC) complex. Biotin carboxylase (BC) catalyzes the carboxylation of biotin on its carrier protein (BCCP) and then the CO(2) group is transferred by the transcarboxylase to acetyl-CoA to form malonyl-CoA. The chain is Acetyl-coenzyme A carboxylase carboxyl transferase subunit beta from Chelativorans sp. (strain BNC1).